The primary structure comprises 47 residues: uncharacterized protein (47 aa).

Residues 22–47 (VGPRTKRANQASPPVGRHSSRLMCPG) form a disordered region.

This is an uncharacterized protein from Saccharomyces cerevisiae (strain ATCC 204508 / S288c) (Baker's yeast).